Here is a 289-residue protein sequence, read N- to C-terminus: Transcriptional regulator Rob (289 aa).

One can recognise an HTH araC/xylS-type domain in the interval 8-106 (RDLLIWLEGH…SQTPALYRRS (99 aa)). DNA-binding regions (H-T-H motif) lie at residues 25–46 (DNVA…KDVT) and 73–96 (ILDI…KKQF).

Transcriptional regulator. Represses transcription of genes belonging to the flagellar regulon, including flhD, flhB and fliC; probably thereby leading to repression of motility. Binds to regulatory regions of target genes, including the promoters of the flhDC operon and of P-type ATPase mgtA. Involved in post-transcriptional regulation of expression. Represses expression of the flhDC operon in a post-transcriptional manner. Binds to the right arm of the replication origin oriC of the chromosome. Rob binding may influence the formation of the nucleoprotein structure, required for oriC function in the initiation of replication. This chain is Transcriptional regulator Rob, found in Salmonella typhimurium (strain LT2 / SGSC1412 / ATCC 700720).